Here is a 629-residue protein sequence, read N- to C-terminus: Long-chain-fatty-acid--AMP ligase FadD32 (629 aa).

ATP-binding positions include 186 to 191, Ser-341, Ala-345, Asp-468, and Arg-482; that span reads TSGSTR.

It belongs to the ATP-dependent AMP-binding enzyme family. Monomer.

The catalysed reaction is a long-chain fatty acid + holo-[ACP] + ATP = a long-chain fatty acyl-[ACP] + AMP + diphosphate. The enzyme catalyses dodecanoate + ATP + H(+) = dodecanoyl-AMP + diphosphate. It catalyses the reaction tetradecanoate + ATP + H(+) = tetradecanoyl-AMP + diphosphate. It functions in the pathway lipid metabolism; mycolic acid biosynthesis. The acyl-AMP ligase activity is inhibited by the alkylphosphate esters of AMP, adenosine 50-dodecylphosphate (AMPC12) and eicosyl-AMP (AMPC20). In terms of biological role, involved in the biosynthesis of mycolic acids. Catalyzes the activation of long-chain fatty acids as acyl-adenylates (acyl-AMP), which are then transferred to the phosphopantetheine arm of the polyketide synthase Pks13 for further chain extension. Can use dodecanoate (C12) and tetradecanoate (C14). The chain is Long-chain-fatty-acid--AMP ligase FadD32 (fadD32) from Mycobacterium marinum (strain ATCC BAA-535 / M).